The primary structure comprises 254 residues: Dihydroanticapsin 7-dehydrogenase (254 aa).

NAD(+) is bound at residue 9–31 (LITGGASGIGYAAVQAFLNQQAN). Ser-139 is a binding site for substrate. Tyr-152 acts as the Proton acceptor in catalysis.

This sequence belongs to the short-chain dehydrogenases/reductases (SDR) family.

It catalyses the reaction L-dihydroanticapsin + NAD(+) = L-anticapsin + NADH + H(+). It participates in antibiotic biosynthesis; bacilysin biosynthesis. Functionally, part of the bacABCDEFG operon responsible for the biosynthesis of bacilysin, an irreversible inactivator of the glutaminase domain of glucosamine synthetase. Catalyzes the dehydrogenation of the C7-hydroxyl group in the 4S-tetrahydrotyrosine (4S-H4Tyr) to yield anticapsin (epoxycyclohexanonyl-Ala). In Bacillus amyloliquefaciens (Bacillus velezensis), this protein is Dihydroanticapsin 7-dehydrogenase.